Reading from the N-terminus, the 84-residue chain is UPF0291 protein SMU_447 (84 aa).

The interval 57 to 84 is disordered; it reads EGNDITPAKLKEIQRQKGIHGRKPEDNS.

Belongs to the UPF0291 family.

It localises to the cytoplasm. The sequence is that of UPF0291 protein SMU_447 from Streptococcus mutans serotype c (strain ATCC 700610 / UA159).